A 77-amino-acid chain; its full sequence is MSRAYLADNDKGWAKKKGADSHATPRPHKQTKMNKLKEIDTDQFLVPPVNAFKLDLDGDIRRGGNKKSERVSGFSGR.

Disordered regions lie at residues 1 to 34 (MSRA…TKMN) and 56 to 77 (LDGD…FSGR). Residues 8 to 20 (DNDKGWAKKKGAD) show a composition bias toward basic and acidic residues. The span at 25-34 (PRPHKQTKMN) shows a compositional bias: basic residues. The span at 56 to 70 (LDGDIRRGGNKKSER) shows a compositional bias: basic and acidic residues.

This is an uncharacterized protein from Dictyostelium discoideum (Social amoeba).